Reading from the N-terminus, the 317-residue chain is tRNA dimethylallyltransferase (317 aa).

Gly-14–Thr-21 is a binding site for ATP. Thr-16–Thr-21 serves as a coordination point for substrate. 2 interaction with substrate tRNA regions span residues Asp-39–Leu-42 and Gln-163–Arg-167.

Belongs to the IPP transferase family. In terms of assembly, monomer. Mg(2+) serves as cofactor.

It carries out the reaction adenosine(37) in tRNA + dimethylallyl diphosphate = N(6)-dimethylallyladenosine(37) in tRNA + diphosphate. Catalyzes the transfer of a dimethylallyl group onto the adenine at position 37 in tRNAs that read codons beginning with uridine, leading to the formation of N6-(dimethylallyl)adenosine (i(6)A). This Stenotrophomonas maltophilia (strain K279a) protein is tRNA dimethylallyltransferase.